Consider the following 159-residue polypeptide: Phosphodiesterase delta-like protein (159 aa).

It belongs to the PDE6D/unc-119 family.

The chain is Phosphodiesterase delta-like protein (pdl-1) from Caenorhabditis elegans.